The following is a 112-amino-acid chain: High mobility group protein D (112 aa).

Residues 5–71 (PKRPLSAYML…DYDRAVKEFE (67 aa)) constitute a DNA-binding region (HMG box). S10 bears the Phosphoserine mark. The residue at position 12 (Y12) is a Phosphotyrosine. The disordered stretch occupies residues 72 to 112 (ANGGSSAANGGGAKKRAKPAKKVAKKSKKEESDEDDDDESE). Basic residues predominate over residues 84-98 (AKKRAKPAKKVAKKS). 2 positions are modified to phosphoserine: S103 and S111. Positions 103 to 112 (SDEDDDDESE) are enriched in acidic residues.

This sequence belongs to the HMGB family.

The protein resides in the nucleus. It is found in the chromosome. Functionally, binds preferentially single-stranded DNA and unwinds double-stranded DNA. Prefers sites containing the sequence 5'-ttg-3'. Facilitates DNA bending. Associated with early embryonic chromatin in the absence of histone H1. In Drosophila melanogaster (Fruit fly), this protein is High mobility group protein D (HmgD).